A 247-amino-acid chain; its full sequence is UPF0246 protein LAF_1150 (247 aa).

The protein belongs to the UPF0246 family.

In Limosilactobacillus fermentum (strain NBRC 3956 / LMG 18251) (Lactobacillus fermentum), this protein is UPF0246 protein LAF_1150.